The following is a 300-amino-acid chain: Haloalkane dehalogenase 1 (300 aa).

One can recognise an AB hydrolase-1 domain in the interval 47–176 (PPIVLLHGEP…FARYSPVLPA (130 aa)). Asp123 acts as the Nucleophile in catalysis. The active-site Proton donor is Asp250. His279 serves as the catalytic Proton acceptor.

Belongs to the haloalkane dehalogenase family. Type 1 subfamily. In terms of assembly, monomer.

It carries out the reaction 1-haloalkane + H2O = a halide anion + a primary alcohol + H(+). Functionally, catalyzes hydrolytic cleavage of carbon-halogen bonds in halogenated aliphatic compounds, leading to the formation of the corresponding primary alcohols, halide ions and protons. The polypeptide is Haloalkane dehalogenase 1 (dhmA1) (Mycobacterium bovis (strain ATCC BAA-935 / AF2122/97)).